Here is a 130-residue protein sequence, read N- to C-terminus: Glycoprotein hormone beta-5 (130 aa).

Positions 1–24 (MKLVYLVLGAVALLLLGGPDSVLS) are cleaved as a signal peptide. 5 disulfides stabilise this stretch: C36–C84, C50–C99, C60–C115, C64–C117, and C120–C127. N-linked (GlcNAc...) asparagine glycosylation occurs at N87.

This sequence belongs to the glycoprotein hormones subunit beta family. Heterodimer with GPHA2; this heterodimer interacts with thyroid-stimulating hormone receptor (TSHR), and hence stimulates cAMP production. N-glycosylated. As to expression, expressed in the anterior lobe of pituitary.

Its subcellular location is the secreted. Functionally, functions as a heterodimeric glycoprotein hormone with GPHA2 able to bind and activate the thyroid-stimulating hormone receptor (TSHR), leading to increased cAMP production. Plays a central role in controlling thyroid cell metabolism. This chain is Glycoprotein hormone beta-5 (Gphb5), found in Mus musculus (Mouse).